Consider the following 117-residue polypeptide: Large ribosomal subunit protein uL18 (117 aa).

It belongs to the universal ribosomal protein uL18 family. As to quaternary structure, part of the 50S ribosomal subunit; part of the 5S rRNA/L5/L18/L25 subcomplex. Contacts the 5S and 23S rRNAs.

Its function is as follows. This is one of the proteins that bind and probably mediate the attachment of the 5S RNA into the large ribosomal subunit, where it forms part of the central protuberance. The polypeptide is Large ribosomal subunit protein uL18 (Francisella tularensis subsp. tularensis (strain FSC 198)).